A 183-amino-acid polypeptide reads, in one-letter code: MSAARESHPHGVKRSASPDDDLGSSNWEAADLGNEERKQKFLRLMGAGKKEHTGRLVIGDHKSTSHFRTGEEDKKINEELESQYQQSMDSKLSGRYRRHCGLGFSEVEDHDGEGDVAGDDDDDDDDSPDPESPDDSESDSESEKEESAEELQAAEHPDEVEDPKNKKDAKSNYKMMFVKSSGS.

Residues 1 to 183 are disordered; that stretch reads MSAARESHPH…KMMFVKSSGS (183 aa). Lys13 participates in a covalent cross-link: Glycyl lysine isopeptide (Lys-Gly) (interchain with G-Cter in SUMO2). Residues Ser15 and Ser17 each carry the phosphoserine modification. Positions 48–78 are enriched in basic and acidic residues; that stretch reads GKKEHTGRLVIGDHKSTSHFRTGEEDKKINE. A Glycyl lysine isopeptide (Lys-Gly) (interchain with G-Cter in SUMO2) cross-link involves residue Lys62. Ser63 carries the phosphoserine modification. A Glycyl lysine isopeptide (Lys-Gly) (interchain with G-Cter in SUMO2) cross-link involves residue Lys75. Ser87, Ser127, and Ser147 each carry phosphoserine. A compositionally biased stretch (acidic residues) spans 106 to 149; that stretch reads EVEDHDGEGDVAGDDDDDDDDSPDPESPDDSESDSESEKEESAE. Residues 153–171 are compositionally biased toward basic and acidic residues; sequence AAEHPDEVEDPKNKKDAKS. Residues Lys174 and Lys179 each carry the N6-acetyllysine modification.

This sequence belongs to the SMAP family.

In Homo sapiens (Human), this protein is Small acidic protein (SMAP).